Consider the following 410-residue polypeptide: Magnesium transporter NIPA3 (410 aa).

The Extracellular segment spans residues 1–67 (MGAQVRLPPG…ISANVENKYS (67 aa)). 4 N-linked (GlcNAc...) asparagine glycosylation sites follow: Asn-25, Asn-35, Asn-50, and Asn-55. The helical transmembrane segment at 68-88 (LYVGLVLAVSSSIFIGSSFIL) threads the bilayer. The Cytoplasmic portion of the chain corresponds to 89–114 (KKKGLLQLASKGFTRAGQGGHSYLKE). Residues 115 to 135 (WLWWVGLLSMGAGEAANFAAY) traverse the membrane as a helical segment. Residue Ala-136 is a topological domain, extracellular. The helical transmembrane segment at 137 to 157 (FAPATLVTPLGALSVLISAIL) threads the bilayer. At 158-165 (SSYFLNEH) the chain is on the cytoplasmic side. Residues 166 to 186 (LNIHGKIGCILSILGSTVMVI) traverse the membrane as a helical segment. Residues 187–207 (HAPQEEEVTSLHEMEMKLRDP) lie on the Extracellular side of the membrane. A helical membrane pass occupies residues 208–228 (GFISFAVIITVISLVLILIVA). Residues 229–233 (PKKGQ) lie on the Cytoplasmic side of the membrane. A helical transmembrane segment spans residues 234–254 (TNILVYISICSLIGAFSVSSV). Residues 255–273 (KGLGIAIKELIEWKPVYKH) lie on the Extracellular side of the membrane. The chain crosses the membrane as a helical span at residues 274-294 (PLVFVLLAVLVLSVTTQINYL). At 295–305 (NKALDTFNTSL) the chain is on the cytoplasmic side. Residues 306–326 (VTPIYYVFFTSMVVTCSAILF) form a helical membrane-spanning segment. At 327-336 (QEWYGMTAGD) the chain is on the extracellular side. A helical transmembrane segment spans residues 337–357 (IIGTLSGFFTIIIGIFLLHAF). The Cytoplasmic portion of the chain corresponds to 358–410 (KNTDITWSELTSTAKKEAVSLNVNENNYVLLENLECSAPGYNDDVTLFSRTDD).

The protein belongs to the NIPA family. Expressed in the pancreatic islets.

It localises to the golgi apparatus membrane. It catalyses the reaction Mg(2+)(in) = Mg(2+)(out). In terms of biological role, acts as a Mg(2+) transporter. Can also transport other divalent cations such as Fe(2+), Sr(2+), Ba(2+), Mn(2+), Cu(2+) and Co(2+) but to a much less extent than Mg(2+). The polypeptide is Magnesium transporter NIPA3 (NIPAL1) (Homo sapiens (Human)).